We begin with the raw amino-acid sequence, 403 residues long: S-adenosylmethionine synthase (403 aa).

ATP is bound at residue His15. Asp17 contacts Mg(2+). Glu43 contributes to the K(+) binding site. L-methionine contacts are provided by Glu56 and Gln99. The interval 99–109 (QSPHIAQGVDR) is flexible loop. ATP contacts are provided by residues 166–168 (DAK), 232–233 (KF), Asp241, 247–248 (RK), Ala264, and Lys268. Asp241 serves as a coordination point for L-methionine. Residue Lys272 participates in L-methionine binding.

This sequence belongs to the AdoMet synthase family. Homotetramer; dimer of dimers. The cofactor is Mg(2+). K(+) is required as a cofactor.

The protein resides in the cytoplasm. The enzyme catalyses L-methionine + ATP + H2O = S-adenosyl-L-methionine + phosphate + diphosphate. It functions in the pathway amino-acid biosynthesis; S-adenosyl-L-methionine biosynthesis; S-adenosyl-L-methionine from L-methionine: step 1/1. In terms of biological role, catalyzes the formation of S-adenosylmethionine (AdoMet) from methionine and ATP. The overall synthetic reaction is composed of two sequential steps, AdoMet formation and the subsequent tripolyphosphate hydrolysis which occurs prior to release of AdoMet from the enzyme. The protein is S-adenosylmethionine synthase of Stenotrophomonas maltophilia (strain K279a).